A 436-amino-acid polypeptide reads, in one-letter code: Alpha-galactosidase mel1 (436 aa).

The signal sequence occupies residues 1–24 (MISISFLNCFFLVFLFLFFSDVHG). Cys45 and Cys77 are joined by a disulfide. The N-linked (GlcNAc...) asparagine glycan is linked to Asn84. Cysteines 126 and 156 form a disulfide. The active-site Nucleophile is the Asp154. N-linked (GlcNAc...) asparagine glycosylation is present at Asn180. The active-site Proton donor is the Asp214.

It belongs to the glycosyl hydrolase 27 family.

Its subcellular location is the endoplasmic reticulum lumen. It localises to the secreted. The catalysed reaction is Hydrolysis of terminal, non-reducing alpha-D-galactose residues in alpha-D-galactosides, including galactose oligosaccharides, galactomannans and galactolipids.. Secreted alpha-galactosidase required for catabolic conversion of melibiose to glucose and galactose. This chain is Alpha-galactosidase mel1 (mel1), found in Schizosaccharomyces pombe (strain 972 / ATCC 24843) (Fission yeast).